The chain runs to 106 residues: MSANKIRCHDEVVVLTGKDKGKIGRVKFLCLSKKTVIVSGINVVKKHQKPVPNKNQPGGIIEKEAFIHLSNVAIFNAALNKADRVGFKIKNGKKIRIFKSNGNLIK.

This sequence belongs to the universal ribosomal protein uL24 family. As to quaternary structure, part of the 50S ribosomal subunit.

Functionally, one of two assembly initiator proteins, it binds directly to the 5'-end of the 23S rRNA, where it nucleates assembly of the 50S subunit. Its function is as follows. One of the proteins that surrounds the polypeptide exit tunnel on the outside of the subunit. This chain is Large ribosomal subunit protein uL24, found in Blochmanniella floridana.